The sequence spans 214 residues: Probable chemoreceptor glutamine deamidase CheD (214 aa).

Belongs to the CheD family.

The catalysed reaction is L-glutaminyl-[protein] + H2O = L-glutamyl-[protein] + NH4(+). Its function is as follows. Probably deamidates glutamine residues to glutamate on methyl-accepting chemotaxis receptors (MCPs), playing an important role in chemotaxis. The protein is Probable chemoreceptor glutamine deamidase CheD of Vibrio vulnificus (strain YJ016).